Consider the following 406-residue polypeptide: MRNALKLNKKNYIDNIHSRSKGWITRSVIDKKGYSQWHYKYAELKDLDMSDENIYITLNTFYKPCRRLENIKELNTLFIDLDYYKTGKTKDQVLMDLEKNYFNQSIPIPNYVIDSGRGMYLIWIINAVPSKALPLWKAVQEYLYNQLKYFGADRQALDATRILRVPGSINSKSKTVVNILDEYEYIYDLREIQNGFLPELKPYERKKGRPSKINYIYRERSLYYGRIQDIIKLCELREYDLKGHRELILFLYRYYLCSFTEDIEKALNDVLELNSMFRQHLSEREVIRATRSAERCYLDKNKQYKYKNETLIELLEITEEEQKYMTIIISKKEYKRRENIRGKKNYQEQLKAKGKATKKEELNVLRKKIKALKEKGFKNKEITLMLEVPIKTLERHITYMKKNGLL.

Functionally, is involved in replication of pIP404. The chain is Replication protein (rep) from Clostridium perfringens.